Reading from the N-terminus, the 432-residue chain is Peptidase B (432 aa).

Positions 196 and 201 each coordinate Mn(2+). Residue K208 is part of the active site. D219, D278, and E280 together coordinate Mn(2+). Residue R282 is part of the active site.

Belongs to the peptidase M17 family. In terms of assembly, homohexamer. Requires Mn(2+) as cofactor.

It is found in the cytoplasm. It catalyses the reaction Release of an N-terminal amino acid, Xaa, from a peptide or arylamide. Xaa is preferably Glu or Asp but may be other amino acids, including Leu, Met, His, Cys and Gln.. Its function is as follows. Probably plays an important role in intracellular peptide degradation. In Yersinia pestis bv. Antiqua (strain Antiqua), this protein is Peptidase B.